Here is an 815-residue protein sequence, read N- to C-terminus: Probable disease resistance protein At5g66910 (815 aa).

Residues 1–150 (MVVVDWLGLG…NINKKLDRLS (150 aa)) enclose the RPW8 domain. NB-ARC domains follow at residues 156-283 (PLVS…DVWQ) and 341-440 (SPDE…DIWM). 196–203 (GPPGCGKT) serves as a coordination point for ATP. 4 LRR repeats span residues 656-678 (NLQE…IPEV), 680-702 (SLKT…IGNL), 704-726 (RLEV…TERL), and 728-750 (NLRS…IGKL).

The protein belongs to the disease resistance NB-LRR family.

Its function is as follows. Probable disease resistance protein. This chain is Probable disease resistance protein At5g66910, found in Arabidopsis thaliana (Mouse-ear cress).